Here is a 490-residue protein sequence, read N- to C-terminus: Sphingomyelinase (490 aa).

A signal peptide spans 1-31; the sequence is MDYAKRIGQVGALAVVLGVGAAVTTHAIGSA. A disordered region spans residues 30-49; sequence SAAPTDPSSSSTDSPVDACS. Topologically, residues 32–136 are periplasmic; sequence APTDPSSSST…FDACDPDGNR (105 aa). A beta stranded transmembrane segment spans residues 137 to 145; sequence MTFAVRERG. Residues 146–161 lie on the Extracellular side of the membrane; it reads APGGPQHGIVTVDQRT. The beta stranded transmembrane segment at 162 to 168 threads the bilayer; the sequence is ASFIYTA. At 169-171 the chain is on the periplasmic side; it reads DPG. Residues 172–182 form a beta stranded membrane-spanning segment; it reads FVGTDTFSVNV. Residues 183–187 lie on the Extracellular side of the membrane; the sequence is SDDTS. Residues 188-196 form a beta stranded membrane-spanning segment; that stretch reads LHVHGLAGY. Residues 197 to 204 lie on the Periplasmic side of the membrane; that stretch reads LGPFHGHD. Residues 205–213 form a beta stranded membrane-spanning segment; the sequence is DVATVTVFV. At 214-490 the chain is on the extracellular side; the sequence is GNTPTDTISG…HYVADNVAVR (277 aa).

This sequence belongs to the SpmT family.

It localises to the cell outer membrane. The catalysed reaction is a sphingomyelin + H2O = phosphocholine + an N-acylsphing-4-enine + H(+). Catalyzes the cleavage of sphingomyelin, a major lipid in eukaryotic cells, into ceramide and phosphocholine, which are then utilized by M.bovis as carbon, nitrogen and phosphorus sources, respectively. Thus, enables M.bovis to utilize sphingomyelin as a source of several essential nutrients for intracellular growth during infection. Furthermore, lyses erythrocytes and constitutes a hemolytic factor. The chain is Sphingomyelinase from Mycobacterium bovis (strain ATCC BAA-935 / AF2122/97).